Reading from the N-terminus, the 1047-residue chain is FACT complex subunit SPT16 (1047 aa).

At Ala2 the chain carries N-acetylalanine. Lys139 bears the N6-acetyllysine mark. Ser188 is modified (phosphoserine). An N6-acetyllysine mark is found at Lys196 and Lys223. A coiled-coil region spans residues 432–507 (LKNEDEEEEE…GEQQIQKARK (76 aa)). Phosphoserine is present on Ser455. Positions 492–518 (RLTEQKGEQQIQKARKSNVSYKNPSLM) are disordered. A Glycyl lysine isopeptide (Lys-Gly) (interchain with G-Cter in SUMO2) cross-link involves residue Lys497. Polar residues predominate over residues 499–514 (EQQIQKARKSNVSYKN). Ser508 carries the post-translational modification Phosphoserine. Residue Lys513 is modified to N6-acetyllysine; alternate. Lys513 participates in a covalent cross-link: Glycyl lysine isopeptide (Lys-Gly) (interchain with G-Cter in SUMO2); alternate. Lys647 participates in a covalent cross-link: Glycyl lysine isopeptide (Lys-Gly) (interchain with G-Cter in SUMO2). A phosphoserine mark is found at Ser650 and Ser658. An N6-acetyllysine mark is found at Lys732 and Lys786. Residue Thr903 is modified to Phosphothreonine. Position 904 is an N6-acetyllysine (Lys904). The disordered stretch occupies residues 918–1047 (EQGGWSFLEP…SSAPPKKKRK (130 aa)). A compositionally biased stretch (acidic residues) spans 927–973 (PEGEGSDAEEGDSESEIEDETFNPSEDDYEEEEEDSDEDYSSEAEES). A phosphoserine mark is found at Ser979, Ser982, Ser986, and Ser1015. The segment covering 985–1005 (ESGKDWDELEEEARKADRESR) has biased composition (basic and acidic residues). Positions 1024 to 1039 (VHSSGRGSNRGSRHSS) are enriched in low complexity.

The protein belongs to the peptidase M24 family. SPT16 subfamily. Interacts with MYOG (via C-terminal region). Component of the FACT complex, a stable heterodimer of SSRP1 and SUPT16H. Also a component of a CK2-SPT16-SSRP1 complex which forms following UV irradiation, composed of SSRP1, SUPT16H, CSNK2A1, CSNK2A2 and CSNK2B. Interacts with NEK9. Binds to histone H2A-H2B. Identified in a centromere complex containing histones H2A, H2B and H4, and at least CENPA, CENPB, CENPC, CENPT, CENPN, HJURP, SUPT16H, SSRP1 and RSF1. Interacts with GTF2E2. As to quaternary structure, (Microbial infection) Interacts with Herpes simplex virus 1 (HHV-1) protein ICP22; this interaction relocalizes the FACT complex to viral genomes in infected cells. ADP-ribosylated. ADP-ribosylation by PARP1 is induced by genotoxic stress and correlates with dissociation of FACT from chromatin. Ubiquitous.

The protein resides in the nucleus. The protein localises to the chromosome. Component of the FACT complex, a general chromatin factor that acts to reorganize nucleosomes. The FACT complex is involved in multiple processes that require DNA as a template such as mRNA elongation, DNA replication and DNA repair. During transcription elongation the FACT complex acts as a histone chaperone that both destabilizes and restores nucleosomal structure. It facilitates the passage of RNA polymerase II and transcription by promoting the dissociation of one histone H2A-H2B dimer from the nucleosome, then subsequently promotes the reestablishment of the nucleosome following the passage of RNA polymerase II. The FACT complex is probably also involved in phosphorylation of 'Ser-392' of p53/TP53 via its association with CK2 (casein kinase II). This is FACT complex subunit SPT16 (SUPT16H) from Homo sapiens (Human).